A 335-amino-acid chain; its full sequence is Probable cytosolic iron-sulfur protein assembly protein Ciao1 (335 aa).

WD repeat units lie at residues 12–51, 57–96, 101–140, 146–185, 192–231, 250–289, and 301–335; these read GHKG…WGTK, GHKR…FECN, GHEN…EFEC, PHTQ…NDWD, SHTS…NTAG, QHSR…KPDE, and AHDQ…KVSE.

Belongs to the WD repeat CIA1 family.

Essential component of the cytosolic iron-sulfur (Fe/S) protein assembly machinery. Required for the maturation of extramitochondrial Fe/S proteins. The sequence is that of Probable cytosolic iron-sulfur protein assembly protein Ciao1 from Drosophila sechellia (Fruit fly).